The sequence spans 603 residues: Multicopper oxidase MCE (603 aa).

The signal sequence occupies residues 1-21 (MNTFICSALICLSWLPGFIQA). Positions 30–144 (ITYAKGAPDG…YGALWIRPKE (115 aa)) constitute a Plastocyanin-like 1 domain. N-linked (GlcNAc...) asparagine glycosylation occurs at Asn75. His79, His81, His123, and His125 together coordinate Cu cation. Asn155, Asn180, Asn235, Asn256, Asn272, Asn275, Asn388, Asn394, Asn413, and Asn455 each carry an N-linked (GlcNAc...) asparagine glycan. Residues 173–353 (LIVSDWSNFT…TPGDYTIRLP (181 aa)) enclose the Plastocyanin-like 2 domain. The 132-residue stretch at 450-581 (LLYNPNSTAA…GGMAGVIMDG (132 aa)) folds into the Plastocyanin-like 3 domain. Position 495 (His495) interacts with Cu cation. Asn512 and Asn595 each carry an N-linked (GlcNAc...) asparagine glycan.

This sequence belongs to the multicopper oxidase family.

It carries out the reaction 4 monapinone A + O2 = 2 dinapinone A + 2 H2O. The enzyme catalyses 4 monapinone E + O2 = 2 dinapinone E + 2 H2O. The protein operates within secondary metabolite biosynthesis. In terms of biological role, multicopper oxidase; part of the gene cluster that mediates the biosynthesis of dinapinones DPA1 (or (M)-DPA) and DPA2 (or (P)-DPA), biaryl dihydronaphthopyranones that act in concert as inhibitors of triacylglycerol accumulation in mammalian cells. The first step in the pathway corresponds to the biosynthesis of dihydroxy-decanoyl-CoA by the fungal type I fatty acid synthase (formed by ORF4 and ORF5). The cluster-specific polyketide synthase (ORF7) then accepts and extends dihydroxy-decanoyl-CoA with 6 malonyl-CoA moieties and cyclizes the molecule to produce a putative polyhydroxynaphthopyranone intermediate, which is further methylated by the cluster-specific methyltransferase (ORF1) at 7-OH to produce monapinone A (MPA). MCE catalyzes the regioselective biaryl coupling of monapinone A (MPA) at the 8,8'-positions to afford dimeric atropisomers DPA1 and DPA2 in a ratio of approximately 1:2.5. Monapinone E (MPE) also appears to be a substrate for MCE and provides the atropisomers dinapinones DPE1 (or (M)-DPE) and DPE2 (or (P)-DPE). This Talaromyces pinophilus (Penicillium pinophilum) protein is Multicopper oxidase MCE.